Reading from the N-terminus, the 389-residue chain is Adenylyltransferase and sulfurtransferase uba4 (389 aa).

Residues Gly-40, Asp-61, 68–72 (SNLHR), Lys-85, and 129–130 (DT) each bind ATP. Positions 171 and 174 each coordinate Zn(2+). Cys-188 functions as the Glycyl thioester intermediate; for adenylyltransferase activity in the catalytic mechanism. Positions 252 and 255 each coordinate Zn(2+). The region spanning 298–387 (AQRAPYLVDV…WSRQIDPNFP (90 aa)) is the Rhodanese domain. Catalysis depends on Cys-347, which acts as the Cysteine persulfide intermediate.

It in the N-terminal section; belongs to the HesA/MoeB/ThiF family. UBA4 subfamily. Zn(2+) serves as cofactor.

Its subcellular location is the cytoplasm. It localises to the cytosol. It catalyses the reaction [molybdopterin-synthase sulfur-carrier protein]-C-terminal Gly-Gly + ATP + H(+) = [molybdopterin-synthase sulfur-carrier protein]-C-terminal Gly-Gly-AMP + diphosphate. It carries out the reaction [molybdopterin-synthase sulfur-carrier protein]-C-terminal Gly-Gly-AMP + S-sulfanyl-L-cysteinyl-[cysteine desulfurase] + AH2 = [molybdopterin-synthase sulfur-carrier protein]-C-terminal-Gly-aminoethanethioate + L-cysteinyl-[cysteine desulfurase] + A + AMP + 2 H(+). It participates in tRNA modification; 5-methoxycarbonylmethyl-2-thiouridine-tRNA biosynthesis. It functions in the pathway cofactor biosynthesis; molybdopterin biosynthesis. Plays a central role in 2-thiolation of mcm(5)S(2)U at tRNA wobble positions of cytosolic tRNA(Lys), tRNA(Glu) and tRNA(Gln). Also essential during biosynthesis of the molybdenum cofactor. Acts by mediating the C-terminal thiocarboxylation of sulfur carriers URM1 and CNX5/MOCS2A. Its N-terminus first activates urm1 and mocs2a as acyl-adenylates (-COAMP), then the persulfide sulfur on the catalytic cysteine is transferred to URM1 and CNX5/MOCS2A to form thiocarboxylation (-COSH) of their C-terminus. The reaction probably involves hydrogen sulfide that is generated from the persulfide intermediate and that acts as a nucleophile towards URM1 and CNX5/MOCS2A. Subsequently, a transient disulfide bond is formed. Does not use thiosulfate as sulfur donor; NFS1 probably acting as a sulfur donor for thiocarboxylation reactions. Required for growth on nitrate as a sole nitrogen source. The chain is Adenylyltransferase and sulfurtransferase uba4 from Ogataea parapolymorpha (strain ATCC 26012 / BCRC 20466 / JCM 22074 / NRRL Y-7560 / DL-1) (Yeast).